Reading from the N-terminus, the 271-residue chain is Imidazole glycerol phosphate synthase subunit HisF (271 aa).

Catalysis depends on residues Asp-12 and Asp-131.

This sequence belongs to the HisA/HisF family. Heterodimer of HisH and HisF.

The protein resides in the cytoplasm. It carries out the reaction 5-[(5-phospho-1-deoxy-D-ribulos-1-ylimino)methylamino]-1-(5-phospho-beta-D-ribosyl)imidazole-4-carboxamide + L-glutamine = D-erythro-1-(imidazol-4-yl)glycerol 3-phosphate + 5-amino-1-(5-phospho-beta-D-ribosyl)imidazole-4-carboxamide + L-glutamate + H(+). It participates in amino-acid biosynthesis; L-histidine biosynthesis; L-histidine from 5-phospho-alpha-D-ribose 1-diphosphate: step 5/9. Its function is as follows. IGPS catalyzes the conversion of PRFAR and glutamine to IGP, AICAR and glutamate. The HisF subunit catalyzes the cyclization activity that produces IGP and AICAR from PRFAR using the ammonia provided by the HisH subunit. This chain is Imidazole glycerol phosphate synthase subunit HisF, found in Methanospirillum hungatei JF-1 (strain ATCC 27890 / DSM 864 / NBRC 100397 / JF-1).